The sequence spans 680 residues: MYSWKSKFKFGKSKEEKEAKHSGFFHSSKKEEQQNNQATAGEHDASITRSSLDRKGTINPSNSSVVPVRVSYDASSSTSTVRDSNGGNSENTNSSQNLDETANIGSTGTPNDATSSSGMMTIKVYNGDDFILPFPITSSEQILNKLLASGVPPPHKEISKEVDALIAQLSRVQIKNQGPADEDLISSESAAKFIPSTIMLPGSSTLNPLLYFTIEFDNTVATIEAEYGTIAKPGFNKISTFDVTRKLPYLKIDVFARIPSILLPSKTWQQEMGLQDEKLQTIFDKINSNQDIHLDSFHLPINLSFDSAASIRLYNHHWITLDNGLGKINISIDYKPSRNKPLSIDDFDLLKVIGKGSFGKVMQVRKKDTQKVYALKAIRKSYIVSKSEVTHTLAERTVLARVDCPFIVPLKFSFQSPEKLYFVLAFINGGELFYHLQKEGRFDLSRARFYTAELLCALDNLHKLDVVYRDLKPENILLDYQGHIALCDFGLCKLNMKDDDKTDTFCGTPEYLAPELLLGLGYTKAVDWWTLGVLLYEMLTGLPPYYDEDVPKMYKKILQEPLVFPDGFDRDAKDLLIGLLSRDPTRRLGYNGADEIRNHPFFSQLSWKRLLMKGYIPPYKPAVSNSMDTSNFDEEFTREKPIDSVVDEYLSESVQKQFGGWTYVGNEQLGSSMVQGRSIR.

The span at Met1–Gly11 shows a compositional bias: basic residues. Positions Met1–Ser117 are disordered. Basic and acidic residues-rich tracts occupy residues Lys12–His21 and Gly41–Gly56. Thr57 carries the post-translational modification Phosphothreonine. Over residues Asn59–Ser71 the composition is skewed to low complexity. Phosphoserine is present on residues Ser61, Ser64, and Ser71. The span at Asp73–Asp83 shows a compositional bias: polar residues. The segment covering Ser84–Asn97 has biased composition (low complexity). Polar residues predominate over residues Leu98–Ser117. Residue Ser170 is modified to Phosphoserine. The Protein kinase domain occupies Phe347–Phe602. ATP is bound by residues Ile353 to Val361 and Lys376. Asp470 functions as the Proton acceptor in the catalytic mechanism. Position 502 is a phosphothreonine (Thr502). Thr504 carries the phosphothreonine; by PKH1 modification. An AGC-kinase C-terminal domain is found at Ser603–Met673. Phosphoserine occurs at positions 644 and 653. Thr662 bears the Phosphothreonine; by PKH1 mark. Phosphoserine is present on Ser671.

This sequence belongs to the protein kinase superfamily. AGC Ser/Thr protein kinase family. RAC subfamily. Post-translationally, autophosphorylated. Phytosphingosine level stimulates phosphorylation by PKH1. The N-terminal half is phosphorylated by FPK1. Phosphorylation is inhibited by exogenous addition of phytosphingosine.

The protein resides in the cytoplasm. It localises to the cell membrane. The enzyme catalyses L-seryl-[protein] + ATP = O-phospho-L-seryl-[protein] + ADP + H(+). The catalysed reaction is L-threonyl-[protein] + ATP = O-phospho-L-threonyl-[protein] + ADP + H(+). With respect to regulation, activated by phytosphingosine (PHS), a sphingoid long chain base. Activated by PKH1 phosphorylation. Its function is as follows. Plays an essential role in the proliferation of yeast cells. Involved in a signaling pathway, required for optimal cell wall integrity, that acts in parallel with the PKC1-SLT2-dependent pathway. Downstream kinase in the sphingolipid-mediated signaling pathway. Phosphorylation is regulated by the intracellular sphingolipid concentration. Disruption or inhibition of sphingolipid synthesis leads to the activation and phosphorylation of YPK1 through the TORC2 and PKH1 pathways, which in turn phosphorylates ORM1 and LAG1 to activate sphingolipid synthesis. Cooperates with SLI1 in mediating resistance to the sphingolipid biosynthesis inhibitor drug myriocin (ISP-1); kinase activity is essential for the resistance. Required for both receptor-mediated and fluid-phase endocytosis, but is not necessary for receptor phosphorylation or ubiquitination. Necessary for the internalization of plasma membrane proteins carrying different types of internalization signals. Acts downstream of the PKH kinases to control endocytosis by phosphorylating components of the endocytic machinery. Phosphorylation of residue Thr-504 in the activation loop and residue Thr-662 are essential for activity. Phosphorylates and down-regulates flippase activator FPK1. In Saccharomyces cerevisiae (strain ATCC 204508 / S288c) (Baker's yeast), this protein is Serine/threonine-protein kinase YPK1 (YPK1).